We begin with the raw amino-acid sequence, 364 residues long: Dual-specificity RNA methyltransferase RlmN (364 aa).

Catalysis depends on Glu-91, which acts as the Proton acceptor. Residues 97–333 (ESDRGTLCIS…VTVRKTRGDD (237 aa)) enclose the Radical SAM core domain. Residues Cys-104 and Cys-338 are joined by a disulfide bond. The [4Fe-4S] cluster site is built by Cys-111, Cys-115, and Cys-118. S-adenosyl-L-methionine is bound by residues 164–165 (GE), Ser-196, 218–220 (SLH), and Asn-295. Catalysis depends on Cys-338, which acts as the S-methylcysteine intermediate.

Belongs to the radical SAM superfamily. RlmN family. The cofactor is [4Fe-4S] cluster.

Its subcellular location is the cytoplasm. The catalysed reaction is adenosine(2503) in 23S rRNA + 2 reduced [2Fe-2S]-[ferredoxin] + 2 S-adenosyl-L-methionine = 2-methyladenosine(2503) in 23S rRNA + 5'-deoxyadenosine + L-methionine + 2 oxidized [2Fe-2S]-[ferredoxin] + S-adenosyl-L-homocysteine. It catalyses the reaction adenosine(37) in tRNA + 2 reduced [2Fe-2S]-[ferredoxin] + 2 S-adenosyl-L-methionine = 2-methyladenosine(37) in tRNA + 5'-deoxyadenosine + L-methionine + 2 oxidized [2Fe-2S]-[ferredoxin] + S-adenosyl-L-homocysteine. In terms of biological role, specifically methylates position 2 of adenine 2503 in 23S rRNA and position 2 of adenine 37 in tRNAs. m2A2503 modification seems to play a crucial role in the proofreading step occurring at the peptidyl transferase center and thus would serve to optimize ribosomal fidelity. This chain is Dual-specificity RNA methyltransferase RlmN, found in Neisseria gonorrhoeae (strain ATCC 700825 / FA 1090).